The primary structure comprises 153 residues: Large ribosomal subunit protein uL15 (153 aa).

The segment at Arg21–Ser42 is disordered. Residues Ile23–Ile35 are compositionally biased toward gly residues.

It belongs to the universal ribosomal protein uL15 family. As to quaternary structure, part of the 50S ribosomal subunit.

Functionally, binds to the 23S rRNA. The sequence is that of Large ribosomal subunit protein uL15 from Rickettsia peacockii (strain Rustic).